The primary structure comprises 429 residues: Enolase (429 aa).

(2R)-2-phosphoglycerate is bound at residue glutamine 163. Residue glutamate 205 is the Proton donor of the active site. Mg(2+)-binding residues include aspartate 242, glutamate 287, and aspartate 314. (2R)-2-phosphoglycerate contacts are provided by lysine 339, arginine 368, serine 369, and lysine 390. Lysine 339 (proton acceptor) is an active-site residue.

The protein belongs to the enolase family. The cofactor is Mg(2+).

It localises to the cytoplasm. It is found in the secreted. The protein localises to the cell surface. The enzyme catalyses (2R)-2-phosphoglycerate = phosphoenolpyruvate + H2O. Its pathway is carbohydrate degradation; glycolysis; pyruvate from D-glyceraldehyde 3-phosphate: step 4/5. Its function is as follows. Catalyzes the reversible conversion of 2-phosphoglycerate (2-PG) into phosphoenolpyruvate (PEP). It is essential for the degradation of carbohydrates via glycolysis. The protein is Enolase of Salinibacter ruber (strain DSM 13855 / M31).